The chain runs to 85 residues: Insect toxin 2-53 (85 aa).

The signal sequence occupies residues 1-21 (MKLLLLLIVSASMLIESLVNA). An LCN-type CS-alpha/beta domain is found at 22-82 (DGYIKRRDGC…TWKSETNTCG (61 aa)). 4 cysteine pairs are disulfide-bonded: Cys-31/Cys-81, Cys-35/Cys-56, Cys-42/Cys-63, and Cys-46/Cys-65. Position 82 is a glycine amide (Gly-82).

This sequence belongs to the long (4 C-C) scorpion toxin superfamily. Sodium channel inhibitor family. Beta subfamily. In terms of tissue distribution, expressed by the venom gland.

The protein resides in the secreted. In terms of biological role, depressant insect toxins cause a transient contraction paralysis followed by a slow flaccid paralysis. They bind voltage-independently to sodium channels (Nav) and block action potentials, primarily by depolarizing the axonal membrane and suppressing the sodium current. In Leiurus hebraeus (Hebrew deathstalker scorpion), this protein is Insect toxin 2-53.